The sequence spans 290 residues: Serine protease 27 (290 aa).

The signal sequence occupies residues 1–22 (MRRPAAVPLLLLLCFGSQRAKA). Residues 23–34 (ATACGRPRMLNR) constitute a propeptide, activation peptide. Residues 35 to 277 (MVGGQDTQEG…HHNWIHRIIP (243 aa)) form the Peptidase S1 domain. N55 carries N-linked (GlcNAc...) asparagine glycosylation. C60 and C76 are disulfide-bonded. H75 (charge relay system) is an active-site residue. N79 carries N-linked (GlcNAc...) asparagine glycosylation. The Charge relay system role is filled by D124. 3 disulfides stabilise this stretch: C158–C235, C191–C214, and C225–C253. S229 functions as the Charge relay system in the catalytic mechanism.

Belongs to the peptidase S1 family. In terms of processing, N-glycosylated. Expressed predominantly in the pancreas.

The protein resides in the secreted. The protein is Serine protease 27 (PRSS27) of Homo sapiens (Human).